The primary structure comprises 1316 residues: DNA-directed RNA polymerase subunit beta' (1316 aa).

Zn(2+) is bound by residues Cys-60, Cys-62, Cys-75, and Cys-78. Positions 535, 537, and 539 each coordinate Mg(2+). Zn(2+) is bound by residues Cys-891, Cys-968, Cys-975, and Cys-978.

It belongs to the RNA polymerase beta' chain family. In terms of assembly, the RNAP catalytic core consists of 2 alpha, 1 beta, 1 beta' and 1 omega subunit. When a sigma factor is associated with the core the holoenzyme is formed, which can initiate transcription. Mg(2+) serves as cofactor. The cofactor is Zn(2+).

The enzyme catalyses RNA(n) + a ribonucleoside 5'-triphosphate = RNA(n+1) + diphosphate. Functionally, DNA-dependent RNA polymerase catalyzes the transcription of DNA into RNA using the four ribonucleoside triphosphates as substrates. The sequence is that of DNA-directed RNA polymerase subunit beta' from Mycobacterium bovis (strain BCG / Pasteur 1173P2).